We begin with the raw amino-acid sequence, 251 residues long: Imidazole glycerol phosphate synthase subunit HisF (251 aa).

Residues Asp-11 and Asp-130 contribute to the active site.

It belongs to the HisA/HisF family. Heterodimer of HisH and HisF.

It is found in the cytoplasm. The catalysed reaction is 5-[(5-phospho-1-deoxy-D-ribulos-1-ylimino)methylamino]-1-(5-phospho-beta-D-ribosyl)imidazole-4-carboxamide + L-glutamine = D-erythro-1-(imidazol-4-yl)glycerol 3-phosphate + 5-amino-1-(5-phospho-beta-D-ribosyl)imidazole-4-carboxamide + L-glutamate + H(+). The protein operates within amino-acid biosynthesis; L-histidine biosynthesis; L-histidine from 5-phospho-alpha-D-ribose 1-diphosphate: step 5/9. In terms of biological role, IGPS catalyzes the conversion of PRFAR and glutamine to IGP, AICAR and glutamate. The HisF subunit catalyzes the cyclization activity that produces IGP and AICAR from PRFAR using the ammonia provided by the HisH subunit. The polypeptide is Imidazole glycerol phosphate synthase subunit HisF (Pelodictyon phaeoclathratiforme (strain DSM 5477 / BU-1)).